The primary structure comprises 180 residues: Large ribosomal subunit protein uL5 (180 aa).

This sequence belongs to the universal ribosomal protein uL5 family. As to quaternary structure, part of the 50S ribosomal subunit; part of the 5S rRNA/L5/L18/L25 subcomplex. Contacts the 5S rRNA and the P site tRNA. Forms a bridge to the 30S subunit in the 70S ribosome.

In terms of biological role, this is one of the proteins that bind and probably mediate the attachment of the 5S RNA into the large ribosomal subunit, where it forms part of the central protuberance. In the 70S ribosome it contacts protein S13 of the 30S subunit (bridge B1b), connecting the 2 subunits; this bridge is implicated in subunit movement. Contacts the P site tRNA; the 5S rRNA and some of its associated proteins might help stabilize positioning of ribosome-bound tRNAs. This Gloeothece citriformis (strain PCC 7424) (Cyanothece sp. (strain PCC 7424)) protein is Large ribosomal subunit protein uL5.